The following is a 1231-amino-acid chain: Pesticidal crystal protein Cry1Bd (1231 aa).

It belongs to the delta endotoxin family.

Functionally, promotes colloidosmotic lysis by binding to the midgut epithelial cells of lepidopteran larvae. Toxic to Plutella xylostella. The sequence is that of Pesticidal crystal protein Cry1Bd (cry1Bd) from Bacillus thuringiensis subsp. wuhanensis.